A 217-amino-acid chain; its full sequence is Somatotropin (217 aa).

The N-terminal stretch at 1-24 (MAAGSWTSLLLAFTLLCLPQLREA) is a signal peptide. Residue His44 coordinates Zn(2+). Cys79 and Cys191 form a disulfide bridge. Ser132 carries the phosphoserine modification. Glu200 contributes to the Zn(2+) binding site. An intrachain disulfide couples Cys208 to Cys215.

It belongs to the somatotropin/prolactin family.

The protein resides in the secreted. In terms of biological role, plays an important role in growth control. Its major role in stimulating body growth is to stimulate the liver and other tissues to secrete IGF1. It stimulates both the differentiation and proliferation of myoblasts. It also stimulates amino acid uptake and protein synthesis in muscle and other tissues. This chain is Somatotropin (GH1), found in Callithrix jacchus (White-tufted-ear marmoset).